Here is a 171-residue protein sequence, read N- to C-terminus: Histone H1, gonadal (171 aa).

Disordered regions lie at residues 1–40 (AASP…AHPP) and 133–171 (AKAK…KAKP). Over residues 9-35 (ASPRKSPKKSPRKSPKKKSPRKRKARS) the composition is skewed to basic residues. An H15 domain is found at 37-111 (AHPPVIDMIT…GATGRFRVGA (75 aa)).

The protein belongs to the histone H1/H5 family. In terms of tissue distribution, sperm.

The protein resides in the nucleus. Its subcellular location is the chromosome. In terms of biological role, histones H1 are necessary for the condensation of nucleosome chains into higher-order structures. This is Histone H1, gonadal from Echinolampas crassa (Sea urchin).